The following is an 81-amino-acid chain: ATP synthase subunit c (81 aa).

2 consecutive transmembrane segments (helical) span residues Ala-6–Ile-26 and Leu-57–Ala-77.

The protein belongs to the ATPase C chain family. As to quaternary structure, F-type ATPases have 2 components, F(1) - the catalytic core - and F(0) - the membrane proton channel. F(1) has five subunits: alpha(3), beta(3), gamma(1), delta(1), epsilon(1). F(0) has four main subunits: a(1), b(1), b'(1) and c(10-14). The alpha and beta chains form an alternating ring which encloses part of the gamma chain. F(1) is attached to F(0) by a central stalk formed by the gamma and epsilon chains, while a peripheral stalk is formed by the delta, b and b' chains.

The protein resides in the cellular thylakoid membrane. Functionally, f(1)F(0) ATP synthase produces ATP from ADP in the presence of a proton or sodium gradient. F-type ATPases consist of two structural domains, F(1) containing the extramembraneous catalytic core and F(0) containing the membrane proton channel, linked together by a central stalk and a peripheral stalk. During catalysis, ATP synthesis in the catalytic domain of F(1) is coupled via a rotary mechanism of the central stalk subunits to proton translocation. Key component of the F(0) channel; it plays a direct role in translocation across the membrane. A homomeric c-ring of between 10-14 subunits forms the central stalk rotor element with the F(1) delta and epsilon subunits. This chain is ATP synthase subunit c, found in Gloeothece citriformis (strain PCC 7424) (Cyanothece sp. (strain PCC 7424)).